Reading from the N-terminus, the 487-residue chain is (S)-N-methylcoclaurine 3'-hydroxylase isozyme 1 (487 aa).

Residues 4-24 form a helical membrane-spanning segment; sequence TVALIAVIISSILYLLFGGSG. Cysteine 429 serves as a coordination point for heme.

This sequence belongs to the cytochrome P450 family. The cofactor is heme.

It localises to the endoplasmic reticulum membrane. It is found in the microsome membrane. It carries out the reaction (S)-N-methylcoclaurine + reduced [NADPH--hemoprotein reductase] + O2 = (S)-3'-hydroxy-N-methylcoclaurine + oxidized [NADPH--hemoprotein reductase] + H2O + H(+). Its pathway is alkaloid biosynthesis; (S)-reticuline biosynthesis; (S)-reticuline from (S)-norcoclaurine: step 3/4. Its function is as follows. 3'-hydroxylation of (S)-N-methylcoclaurine. The chain is (S)-N-methylcoclaurine 3'-hydroxylase isozyme 1 (CYP80B1) from Eschscholzia californica (California poppy).